A 122-amino-acid polypeptide reads, in one-letter code: UPF0102 protein XOO3839 (122 aa).

Belongs to the UPF0102 family.

The polypeptide is UPF0102 protein XOO3839 (Xanthomonas oryzae pv. oryzae (strain KACC10331 / KXO85)).